Here is a 417-residue protein sequence, read N- to C-terminus: Serine--tRNA ligase (417 aa).

Position 232–234 (232–234 (TAE)) interacts with L-serine. Residues 263-265 (RRE) and Val279 contribute to the ATP site. Glu286 is a binding site for L-serine. An ATP-binding site is contributed by 350–353 (EISS). L-serine is bound at residue Ser385.

It belongs to the class-II aminoacyl-tRNA synthetase family. Type-1 seryl-tRNA synthetase subfamily. As to quaternary structure, homodimer. The tRNA molecule binds across the dimer.

Its subcellular location is the cytoplasm. It carries out the reaction tRNA(Ser) + L-serine + ATP = L-seryl-tRNA(Ser) + AMP + diphosphate + H(+). The enzyme catalyses tRNA(Sec) + L-serine + ATP = L-seryl-tRNA(Sec) + AMP + diphosphate + H(+). The protein operates within aminoacyl-tRNA biosynthesis; selenocysteinyl-tRNA(Sec) biosynthesis; L-seryl-tRNA(Sec) from L-serine and tRNA(Sec): step 1/1. Its function is as follows. Catalyzes the attachment of serine to tRNA(Ser). Is also able to aminoacylate tRNA(Sec) with serine, to form the misacylated tRNA L-seryl-tRNA(Sec), which will be further converted into selenocysteinyl-tRNA(Sec). The protein is Serine--tRNA ligase of Leptospira interrogans serogroup Icterohaemorrhagiae serovar copenhageni (strain Fiocruz L1-130).